Here is a 396-residue protein sequence, read N- to C-terminus: Purine ribonucleoside efflux pump NepI (396 aa).

The Cytoplasmic portion of the chain corresponds to 1–21 (MSEFIAENRGANAITRPNWSA). Residues 22-42 (VFSVAFCVACLIIVEFLPVSL) traverse the membrane as a helical segment. Over 43–54 (LTPMAQDLGISE) the chain is Periplasmic. Residues 55-75 (GVAGQSVTVTAFVAMFASLFI) form a helical membrane-spanning segment. Topologically, residues 76-85 (TQTIQATDRR) are cytoplasmic. A helical transmembrane segment spans residues 86 to 106 (YVVILFAVLLTLSCLLVSFAN). A topological domain (periplasmic) is located at residue Ser-107. A helical transmembrane segment spans residues 108–128 (FSLLLIGRACLGVALGGFWAI). The Cytoplasmic segment spans residues 129–147 (SASLTMRLVPPRTVPKALS). A helical transmembrane segment spans residues 148–168 (VIFGAVSIALVIAAPLGSFLG). Over 169–175 (ELIGWRN) the chain is Periplasmic. Residues 176 to 196 (VFNAAAAMGVLCIFWIIKSLP) traverse the membrane as a helical segment. At 197–215 (SLPGEPSHQKQNTFRLLQR) the chain is on the cytoplasmic side. A helical transmembrane segment spans residues 216 to 236 (PGVMAGMIAIFMSFAGQFAFF). Residues 237–255 (TYIRPVYMNLAGFGVDGLT) are Periplasmic-facing. The chain crosses the membrane as a helical span at residues 256 to 276 (LVLLSFGIASFVGTSLSSFIL). Over 277–281 (KRSVK) the chain is Cytoplasmic. The helical transmembrane segment at 282 to 302 (LALAGAPFVLALSALVLTLWG) threads the bilayer. The Periplasmic portion of the chain corresponds to 303-305 (SDK). A helical transmembrane segment spans residues 306-326 (IVATGVAIIWGLTFALIPVGW). Residues 327 to 343 (STWITRSLADQAEKAGS) are Cytoplasmic-facing. Residues 344-364 (IQVAVIQLANTCGAAIGGYAL) form a helical membrane-spanning segment. The Periplasmic portion of the chain corresponds to 365–366 (DN). The helical transmembrane segment at 367-387 (IGLTSPLMLSGTLMLLTALLV) threads the bilayer. The Cytoplasmic segment spans residues 388–396 (TAKVKMKKS).

It belongs to the major facilitator superfamily. DHA1 family. NepI (TC 2.A.1.2.26) subfamily.

The protein localises to the cell inner membrane. It catalyses the reaction inosine(in) + H(+)(out) = inosine(out) + H(+)(in). It carries out the reaction guanosine(in) + H(+)(out) = guanosine(out) + H(+)(in). Functionally, involved in the efflux of purine ribonucleosides, such as inosine and guanosine. This Escherichia coli O6:K15:H31 (strain 536 / UPEC) protein is Purine ribonucleoside efflux pump NepI.